The following is a 333-amino-acid chain: PDZ domain-containing protein GIPC1 (333 aa).

Positions M1–A11 are enriched in basic residues. Residues M1–L54 form a disordered region. Over residues G23–Q44 the composition is skewed to gly residues. S68 is subject to Phosphoserine. The 81-residue stretch at E133–E213 folds into the PDZ domain. 3 positions are modified to phosphoserine: S222, S225, and S232. A disordered region spans residues Q223–R244. Gly residues predominate over residues G228 to R240. A Phosphothreonine modification is found at T242. Position 247 is a phosphoserine (S247).

It belongs to the GIPC family. Interacts with GLUT1 (C-terminus), ACTN1, KIF1B, MYO6, PLEKHG5, SDC4/syndecan-4 and SEMA4C/semaphorin-4C. Interacts with RGS19 C-terminus. Interacts with HTLV-I Tax through the PDZ domain. In terms of tissue distribution, widely expressed. Expressed in skeletal muscle (at protein level).

It is found in the cytoplasm. It localises to the membrane. May be involved in G protein-linked signaling. In Homo sapiens (Human), this protein is PDZ domain-containing protein GIPC1 (GIPC1).